The primary structure comprises 193 residues: ATP-dependent Clp protease proteolytic subunit 1 (193 aa).

Catalysis depends on Ser-99, which acts as the Nucleophile. The active site involves His-124.

Belongs to the peptidase S14 family. As to quaternary structure, fourteen ClpP subunits assemble into 2 heptameric rings which stack back to back to give a disk-like structure with a central cavity, resembling the structure of eukaryotic proteasomes.

The protein localises to the cytoplasm. The catalysed reaction is Hydrolysis of proteins to small peptides in the presence of ATP and magnesium. alpha-casein is the usual test substrate. In the absence of ATP, only oligopeptides shorter than five residues are hydrolyzed (such as succinyl-Leu-Tyr-|-NHMec, and Leu-Tyr-Leu-|-Tyr-Trp, in which cleavage of the -Tyr-|-Leu- and -Tyr-|-Trp bonds also occurs).. Its function is as follows. Cleaves peptides in various proteins in a process that requires ATP hydrolysis. Has a chymotrypsin-like activity. Plays a major role in the degradation of misfolded proteins. In Shouchella clausii (strain KSM-K16) (Alkalihalobacillus clausii), this protein is ATP-dependent Clp protease proteolytic subunit 1.